Reading from the N-terminus, the 227-residue chain is GFP-like non-fluorescent chromoprotein (227 aa).

Positions 63–65 (AYG) form a cross-link, 5-imidazolinone (Ala-Gly). Position 64 is a 2,3-didehydrotyrosine (tyrosine 64).

This sequence belongs to the GFP family. As to quaternary structure, homotetramer. Contains a chromophore consisting of modified amino acid residues. The chromophore is formed by autocatalytic backbone condensation between Xaa-N and Gly-(N+2), and oxidation of Tyr-(N+1) to didehydrotyrosine. Maturation of the chromophore requires nothing other than molecular oxygen. The precise stereochemistry of the tyrosine has not been determined.

Its function is as follows. Non-fluorescent pigment protein that is mauve in color. The wild-type form is non-fluorescent. The sequence is that of GFP-like non-fluorescent chromoprotein from Condylactis gigantea (Giant Caribbean anemone).